Reading from the N-terminus, the 195-residue chain is HTH-type transcriptional regulator BetI (195 aa).

Residues 8 to 68 (SIRRRQLIDA…ATMRDITSQL (61 aa)) form the HTH tetR-type domain. Residues 31–50 (TIAQIARRAGVSTGIISHYF) constitute a DNA-binding region (H-T-H motif).

Its pathway is amine and polyamine biosynthesis; betaine biosynthesis via choline pathway [regulation]. Functionally, repressor involved in the biosynthesis of the osmoprotectant glycine betaine. It represses transcription of the choline transporter BetT and the genes of BetAB involved in the synthesis of glycine betaine. The sequence is that of HTH-type transcriptional regulator BetI from Escherichia coli O17:K52:H18 (strain UMN026 / ExPEC).